We begin with the raw amino-acid sequence, 244 residues long: Phosphoadenosine 5'-phosphosulfate reductase (244 aa).

Cysteine 239 serves as the catalytic Nucleophile; cysteine thiosulfonate intermediate.

The protein belongs to the PAPS reductase family. CysH subfamily.

It is found in the cytoplasm. It catalyses the reaction [thioredoxin]-disulfide + sulfite + adenosine 3',5'-bisphosphate + 2 H(+) = [thioredoxin]-dithiol + 3'-phosphoadenylyl sulfate. Its pathway is sulfur metabolism; hydrogen sulfide biosynthesis; sulfite from sulfate: step 3/3. Catalyzes the formation of sulfite from phosphoadenosine 5'-phosphosulfate (PAPS) using thioredoxin as an electron donor. The protein is Phosphoadenosine 5'-phosphosulfate reductase of Salmonella arizonae (strain ATCC BAA-731 / CDC346-86 / RSK2980).